The sequence spans 504 residues: Zinc finger protein AEBP2 (504 aa).

Positions 1-219 (MAAALADMAD…SRMDSEDSIS (219 aa)) are disordered. The residue at position 2 (A2) is an N-acetylalanine. Residues 16-30 (RLSPLSPGSPGPAAR) show a composition bias toward low complexity. 3 positions are modified to phosphoserine: S18, S21, and S24. Over residues 36 to 49 (PEEEEEEDDEEAEA) the composition is skewed to acidic residues. The span at 59–69 (GGAGGGAGGGE) shows a compositional bias: gly residues. A compositionally biased stretch (acidic residues) spans 86–110 (GDEDEDEEDDEDEGSSSGGAEEESS). The span at 129–140 (SLSPGAASSSSG) shows a compositional bias: low complexity. The residue at position 131 (S131) is a Phosphoserine. The span at 142–153 (GDGKEGLEEPKG) shows a compositional bias: basic and acidic residues. 2 stretches are compositionally biased toward gly residues: residues 154–168 (PRGG…GGGS) and 178–189 (GDEGYGTGGGGS). Residues S199, S203, and S204 each carry the phosphoserine modification. Positions 202-287 (MSSDGEPLSR…IHVDGQRGGV (86 aa)) are interaction with RBBP4. The C2H2-type 1 zinc-finger motif lies at 254–279 (YNCCWDQCQACFNSSPDLADHIRSIH). The C2H2-type 2; degenerate zinc finger occupies 293 to 315 (KGCKVYNTPSTSQSWLQRHMLTH). The C2H2-type 3 zinc finger occupies 321–345 (FKCVVGGCNASFASQGGLARHVPTH). The segment covering 345–358 (HFSQQNSSKVSSQP) has biased composition (polar residues). The disordered stretch occupies residues 345–387 (HFSQQNSSKVSSQPKAKEESPSKAGMNKRRKLKNKRRRSLPRP). The segment covering 370 to 385 (MNKRRKLKNKRRRSLP) has biased composition (basic residues). At S383 the chain carries Phosphoserine. Positions 400–471 (RHRAICFNLS…QLKTKVVHLS (72 aa)) are interaction with SUZ12. The segment at 488–504 (TMPQKRLKRFDILNFPR) is important for nucleosome binding activity of the PRC2 complex.

This sequence belongs to the AEBP2/jing C2H2-type zinc-finger family. As to quaternary structure, self-associates. Associates with the PRC2 complex, which consists of the core components EED, EZH1 or EZH2, SUZ12, and RBBP4, and various combinations of accessory subunits including AEBP2, JARID2, PHF19, MTF2 and EPOP. Found in a monomeric PRC2.2 (class 2) complex consisting of at least SUZ12, RBBP4, AEBP2 and JARID2. Within the PRC2 complex, interacts directly with SUZ12; competes with PHF19 for SUZ12 binding. Interacts with EED, EZH2, and RBBP4. May also interact with RBBP7. As to expression, expressed in brain, brown adipose tissue, white adipose tissue, heart, kidney, lung, skeletal muscle, small intestine and spleen. Expressed at low levels in liver.

It localises to the nucleus. Acts as an accessory subunit for the core Polycomb repressive complex 2 (PRC2), which mediates histone H3K27 (H3K27me3) trimethylation on chromatin leading to transcriptional repression of the affected target gene. Plays a role in nucleosome localization of the PRC2 complex. In Mus musculus (Mouse), this protein is Zinc finger protein AEBP2 (Aebp2).